The chain runs to 401 residues: Golgi membrane protein 1 (401 aa).

At Met-1 the chain carries N-acetylmethionine. Over Met-1–Lys-12 the chain is Cytoplasmic. The helical; Signal-anchor for type II membrane protein transmembrane segment at Ser-13–Ala-35 threads the bilayer. Topologically, residues Ser-36–Leu-401 are lumenal. Positions Val-40–Glu-205 form a coiled coil. Residue Asn-109 is glycosylated (N-linked (GlcNAc...) (complex) asparagine). An N-linked (GlcNAc...) asparagine glycan is attached at Asn-144. Residues Thr-178–Leu-401 are disordered. Ser-187 is modified (phosphoserine). Polar residues predominate over residues Leu-228 to Pro-238. Basic and acidic residues-rich tracts occupy residues Leu-244–Thr-255 and Glu-264–Val-285. A compositionally biased stretch (gly residues) spans Gly-286–Glu-295. The segment covering Gln-298–Asn-312 has biased composition (polar residues). Residue Ser-309 is modified to Phosphoserine; by FAM20C. The segment covering Asp-350–Ser-360 has biased composition (acidic residues). Over residues Glu-381–Glu-395 the composition is skewed to basic and acidic residues. Asn-398 is a glycosylation site (N-linked (GlcNAc...) asparagine).

The protein belongs to the GOLM family. Interacts with DYM. Post-translationally, glycosylated. Phosphorylation sites are present in the extracellular medium. As to expression, widely expressed. Highly expressed in colon, prostate, trachea and stomach. Expressed at lower level in testis, muscle, lymphoid tissues, white blood cells and spleen. Predominantly expressed by cells of the epithelial lineage. Expressed at low level in normal liver. Expression significantly increases in virus (HBV, HCV) infected liver. Expression does not increase in liver disease due to non-viral causes (alcohol-induced liver disease, autoimmune hepatitis). Increased expression in hepatocytes appears to be a general feature of advanced liver disease. In liver tissue from patients with adult giant-cell hepatitis (GCH), it is strongly expressed in hepatocytes-derived syncytial giant cells. Constitutively expressed by biliary epithelial cells but not by hepatocytes.

The protein resides in the golgi apparatus. The protein localises to the cis-Golgi network membrane. Unknown. Cellular response protein to viral infection. This chain is Golgi membrane protein 1 (GOLM1), found in Homo sapiens (Human).